Reading from the N-terminus, the 348-residue chain is Holliday junction branch migration complex subunit RuvB (348 aa).

The disordered stretch occupies residues 1–20 (MKPPARMVSPERRSDDVGDT). Positions 1–183 (MKPPARMVSP…FGIPIRLNFY (183 aa)) are large ATPase domain (RuvB-L). ATP is bound by residues Leu-22, Arg-23, Gly-64, Lys-67, Thr-68, Thr-69, 130–132 (EDF), Arg-173, Tyr-183, and Arg-220. Thr-68 contacts Mg(2+). The interval 184–254 (TVEELEGIVT…IADHALSALE (71 aa)) is small ATPAse domain (RuvB-S). Positions 257–348 (AAGLDAMDRR…QIGLFGNDDD (92 aa)) are head domain (RuvB-H). DNA-binding residues include Arg-293, Arg-312, and Arg-317.

This sequence belongs to the RuvB family. Homohexamer. Forms an RuvA(8)-RuvB(12)-Holliday junction (HJ) complex. HJ DNA is sandwiched between 2 RuvA tetramers; dsDNA enters through RuvA and exits via RuvB. An RuvB hexamer assembles on each DNA strand where it exits the tetramer. Each RuvB hexamer is contacted by two RuvA subunits (via domain III) on 2 adjacent RuvB subunits; this complex drives branch migration. In the full resolvosome a probable DNA-RuvA(4)-RuvB(12)-RuvC(2) complex forms which resolves the HJ.

It is found in the cytoplasm. The catalysed reaction is ATP + H2O = ADP + phosphate + H(+). Its function is as follows. The RuvA-RuvB-RuvC complex processes Holliday junction (HJ) DNA during genetic recombination and DNA repair, while the RuvA-RuvB complex plays an important role in the rescue of blocked DNA replication forks via replication fork reversal (RFR). RuvA specifically binds to HJ cruciform DNA, conferring on it an open structure. The RuvB hexamer acts as an ATP-dependent pump, pulling dsDNA into and through the RuvAB complex. RuvB forms 2 homohexamers on either side of HJ DNA bound by 1 or 2 RuvA tetramers; 4 subunits per hexamer contact DNA at a time. Coordinated motions by a converter formed by DNA-disengaged RuvB subunits stimulates ATP hydrolysis and nucleotide exchange. Immobilization of the converter enables RuvB to convert the ATP-contained energy into a lever motion, pulling 2 nucleotides of DNA out of the RuvA tetramer per ATP hydrolyzed, thus driving DNA branch migration. The RuvB motors rotate together with the DNA substrate, which together with the progressing nucleotide cycle form the mechanistic basis for DNA recombination by continuous HJ branch migration. Branch migration allows RuvC to scan DNA until it finds its consensus sequence, where it cleaves and resolves cruciform DNA. The chain is Holliday junction branch migration complex subunit RuvB from Bradyrhizobium sp. (strain ORS 278).